The following is a 681-amino-acid chain: Peroxisomal acyl-coenzyme A oxidase 2 (681 aa).

The residue at position 9 (Ser-9) is a Phosphoserine. 5 positions are modified to N6-succinyllysine: Lys-66, Lys-137, Lys-453, Lys-561, and Lys-667. Residues 679–681 carry the Microbody targeting signal motif; it reads SNL.

It belongs to the acyl-CoA oxidase family. In terms of assembly, homodimer. It depends on FAD as a cofactor. Liver and kidney.

The protein resides in the peroxisome. It catalyses the reaction (25R)-3alpha,7alpha,12alpha-trihydroxy-5beta-cholestan-26-oyl-CoA + A + H2O = (24R,25R)-3alpha,7alpha,12alpha,24-tetrahydroxy-5beta-cholestan-26-oyl-CoA + AH2. The catalysed reaction is (25S)-3alpha,7alpha,12alpha-trihydroxy-5beta-cholestan-26-oyl-CoA + O2 = (24E)-3alpha,7alpha,12alpha-trihydroxy-5beta-cholest-24-en-26-oyl-CoA + H2O2. In terms of biological role, oxidizes the CoA esters of the bile acid intermediates di- and tri-hydroxycholestanoic acids. Capable of oxidizing short as well as long chain 2-methyl branched fatty acids. This Oryctolagus cuniculus (Rabbit) protein is Peroxisomal acyl-coenzyme A oxidase 2.